Reading from the N-terminus, the 1863-residue chain is Breast cancer type 1 susceptibility protein homolog (1863 aa).

Met1 is subject to N-acetylmethionine. Residues 24–65 (CPICLELIKEPVSTKCDHIFCRFCMLKLLNQKKGPSQCPLCK) form an RING-type zinc finger. Lys109 participates in a covalent cross-link: Glycyl lysine isopeptide (Lys-Gly) (interchain with G-Cter in SUMO2). Residue Ser114 is modified to Phosphoserine. 2 stretches are compositionally biased toward basic and acidic residues: residues 231-240 (KDITNTEHHQ) and 248-260 (TTEK…HPEK). Positions 231 to 266 (KDITNTEHHQSSNNDLNTTEKHATERHPEKYQGSSV) are disordered. Lys300 participates in a covalent cross-link: Glycyl lysine isopeptide (Lys-Gly) (interchain with G-Cter in SUMO2). Residues 305 to 336 (NKSKQPGLARSQHNRWTGSKETCNDRQTPSTE) are disordered. Polar residues predominate over residues 318–334 (NRWTGSKETCNDRQTPS). Residue Lys338 forms a Glycyl lysine isopeptide (Lys-Gly) (interchain with G-Cter in SUMO2) linkage. Phosphoserine occurs at positions 394, 397, 422, and 433. Glycyl lysine isopeptide (Lys-Gly) (interchain with G-Cter in SUMO2) cross-links involve residues Lys442, Lys458, and Lys518. Ser550 is modified (phosphoserine). Lys582 is covalently cross-linked (Glycyl lysine isopeptide (Lys-Gly) (interchain with G-Cter in SUMO2)). The tract at residues 653 to 699 (NYNQMPVRHSRNLQLMEDKESATGAKKSNKPNEQTSKRHASDTFPEL) is disordered. Residues Ser693, Ser707, and Ser724 each carry the phosphoserine modification. Residues Lys733 and Lys738 each participate in a glycyl lysine isopeptide (Lys-Gly) (interchain with G-Cter in SUMO2) cross-link. Phosphoserine is present on residues Ser752 and Ser839. The tract at residues 886 to 914 (AHSRSLKKQSPKVTSECEQKEENQGKKES) is disordered. Positions 900-914 (SECEQKEENQGKKES) are enriched in basic and acidic residues. Residues Lys917 and Lys986 each participate in a glycyl lysine isopeptide (Lys-Gly) (interchain with G-Cter in SUMO2) cross-link. Ser987 carries the post-translational modification Phosphoserine; by CHEK2. Position 1008 is a phosphoserine (Ser1008). The segment covering 1042–1059 (SNINEVGSSTNEVGSSIN) has biased composition (polar residues). The segment at 1042-1062 (SNINEVGSSTNEVGSSINEVG) is disordered. A Glycyl lysine isopeptide (Lys-Gly) (interchain with G-Cter in SUMO2) cross-link involves residue Lys1079. Phosphoserine occurs at positions 1143, 1189, 1191, 1211, 1217, 1218, 1280, 1328, 1336, 1342, and 1387. Positions 1323–1397 (RMRHQSESQG…QSEILTTQQR (75 aa)) are disordered. Residues 1342–1360 (SDDEERGTGLEEDNQEEQS) show a composition bias toward acidic residues. Over residues 1373–1397 (ESETSVSEDCSRLSSQSEILTTQQR) the composition is skewed to polar residues. Phosphothreonine is present on Thr1394. Positions 1397 to 1424 (RDTMQDNLIKLQQEMAELEAVLEQHGSQ) are interaction with PALB2. Phosphoserine occurs at positions 1423, 1457, 1524, and 1542. A disordered region spans residues 1442 to 1501 (LRNPEQSTSEKAVLTSQKSSEYPINQNPEGLSADKFEVSADSSTSKNKEPGVERSSPSKC). Polar residues predominate over residues 1445–1470 (PEQSTSEKAVLTSQKSSEYPINQNPE). Residues 1540 to 1618 (EKSGPHDLME…ESAQSPAAAH (79 aa)) are disordered. A compositionally biased stretch (polar residues) spans 1607 to 1618 (VAESAQSPAAAH). BRCT domains lie at 1642 to 1736 (STER…DFEV) and 1756 to 1855 (PDRK…TYLI).

Heterodimer with BARD1. Part of the BRCA1-associated genome surveillance complex (BASC), which contains BRCA1, MSH2, MSH6, MLH1, ATM, BLM, PMS2 and the MRE11-RAD50-NBN protein (MRN) complex. This association could be a dynamic process changing throughout the cell cycle and within subnuclear domains. Component of the BRCA1-A complex, at least composed of BRCA1, BARD1, UIMC1/RAP80, ABRAXAS1, BRCC3/BRCC36, BABAM2 and BABAM1/NBA1. Interacts (via the BRCT domains) with ABRAXAS1 (phosphorylated form); this is important for recruitment to sites of DNA damage. Can form a heterotetramer with two molecules of ABRAXAS1 (phosphorylated form). Component of the BRCA1-RBBP8 complex. Interacts (via the BRCT domains) with RBBP8 ('Ser-327' phosphorylated form); the interaction ubiquitinates RBBP8, regulates CHEK1 activation, and involves RBBP8 in BRCA1-dependent G2/M checkpoint control on DNA damage. Associates with RNA polymerase II holoenzyme. Interacts with SMC1A, NELFB, DCLRE1C, CLSPN. CHEK1, CHEK2, BAP1, BRCC3, UBXN1 and PCLAF. Interacts (via BRCT domains) with BRIP1 (phosphorylated form). Interacts with FANCD2 (ubiquitinated form). Interacts with H2AX (phosphorylated on 'Ser-140'). Interacts (via the BRCT domains) with ACACA (phosphorylated form); the interaction prevents dephosphorylation of ACACA. Part of a BRCA complex containing BRCA1, BRCA2 and PALB2. Interacts directly with PALB2; the interaction is essential for its function in HRR. Interacts directly with BRCA2; the interaction occurs only in the presence of PALB2 which serves as the bridging protein. Interacts (via the BRCT domains) with LMO4; the interaction represses the transcriptional activity of BRCA1. Interacts (via the BRCT domains) with CCAR2 (via N-terminus); the interaction represses the transcriptional activator activity of BRCA1. Interacts with EXD2. Interacts (via C-terminus) with DHX9; this interaction is direct and links BRCA1 to the RNA polymerase II holoenzyme. Interacts with DNA helicase ZGRF1; the interaction is increased following DNA damage induction. In terms of processing, phosphorylated in response to IR, UV, and various stimuli that cause checkpoint activation, probably by ATM or ATR. Phosphorylation at Ser-987 by CHEK2 regulates mitotic spindle assembly. Phosphorylation by AURKA regulates centrosomal microtubule nucleation. Autoubiquitinated, undergoes 'Lys-6'-linked polyubiquitination. 'Lys-6'-linked polyubiquitination does not promote degradation.

It localises to the nucleus. Its subcellular location is the chromosome. It is found in the cytoplasm. The enzyme catalyses S-ubiquitinyl-[E2 ubiquitin-conjugating enzyme]-L-cysteine + [acceptor protein]-L-lysine = [E2 ubiquitin-conjugating enzyme]-L-cysteine + N(6)-ubiquitinyl-[acceptor protein]-L-lysine.. It functions in the pathway protein modification; protein ubiquitination. Its function is as follows. E3 ubiquitin-protein ligase that specifically mediates the formation of 'Lys-6'-linked polyubiquitin chains and plays a central role in DNA repair by facilitating cellular responses to DNA damage. It is unclear whether it also mediates the formation of other types of polyubiquitin chains. The BRCA1-BARD1 heterodimer coordinates a diverse range of cellular pathways such as DNA damage repair, ubiquitination and transcriptional regulation to maintain genomic stability. Regulates centrosomal microtubule nucleation. Required for appropriate cell cycle arrests after ionizing irradiation in both the S-phase and the G2 phase of the cell cycle. Required for FANCD2 targeting to sites of DNA damage. Inhibits lipid synthesis by binding to inactive phosphorylated ACACA and preventing its dephosphorylation. Contributes to homologous recombination repair (HRR) via its direct interaction with PALB2, fine-tunes recombinational repair partly through its modulatory role in the PALB2-dependent loading of BRCA2-RAD51 repair machinery at DNA breaks. Component of the BRCA1-RBBP8 complex which regulates CHEK1 activation and controls cell cycle G2/M checkpoints on DNA damage via BRCA1-mediated ubiquitination of RBBP8. Acts as a transcriptional activator. In Macaca mulatta (Rhesus macaque), this protein is Breast cancer type 1 susceptibility protein homolog (BRCA1).